The chain runs to 153 residues: ATP synthase subunit a (153 aa).

A run of 2 helical transmembrane segments spans residues 43-63 (AFHL…LLIF) and 104-124 (IAPL…VDLI).

It belongs to the ATPase A chain family. As to quaternary structure, F-type ATPases have 2 components, CF(1) - the catalytic core - and CF(0) - the membrane proton channel. CF(1) has five subunits: alpha(3), beta(3), gamma(1), delta(1), epsilon(1). CF(0) has three main subunits: a(1), b(2) and c(9-12). The alpha and beta chains form an alternating ring which encloses part of the gamma chain. CF(1) is attached to CF(0) by a central stalk formed by the gamma and epsilon chains, while a peripheral stalk is formed by the delta and b chains.

It localises to the cell inner membrane. In terms of biological role, key component of the proton channel; it plays a direct role in the translocation of protons across the membrane. The protein is ATP synthase subunit a (atpB) of Pseudomonas putida (Arthrobacter siderocapsulatus).